The following is a 207-amino-acid chain: Fibroblast growth factor 18 (207 aa).

The first 27 residues, 1-27, serve as a signal peptide directing secretion; the sequence is MYSAPSACTCLCLHFLLLCFQVQVLAA. N-linked (GlcNAc...) asparagine glycosylation is present at asparagine 39. Cysteine 109 and cysteine 127 are joined by a disulfide. Asparagine 137 carries N-linked (GlcNAc...) asparagine glycosylation.

The protein belongs to the heparin-binding growth factors family. In terms of assembly, interacts with FGFR3 and FGFR4.

The protein resides in the secreted. Its function is as follows. Plays an important role in the regulation of cell proliferation, cell differentiation and cell migration. Required for normal ossification and bone development. Stimulates hepatic and intestinal proliferation. In Mus musculus (Mouse), this protein is Fibroblast growth factor 18 (Fgf18).